A 396-amino-acid polypeptide reads, in one-letter code: L-lactate dehydrogenase (396 aa).

The FMN hydroxy acid dehydrogenase domain occupies 1-380 (MIISAASDYR…SGDSLVQELG (380 aa)). Tyr24 contributes to the substrate binding site. The FMN site is built by Ser106 and Gln127. Substrate is bound at residue Tyr129. Residue Thr155 coordinates FMN. Substrate is bound at residue Arg164. Lys251 contributes to the FMN binding site. Residue His275 is the Proton acceptor of the active site. Position 278 (Arg278) interacts with substrate. 306-330 (DSGIRNGLDVVRMIALGADTVLLGR) contributes to the FMN binding site.

It belongs to the FMN-dependent alpha-hydroxy acid dehydrogenase family. FMN is required as a cofactor.

It is found in the cell inner membrane. It catalyses the reaction (S)-lactate + A = pyruvate + AH2. Functionally, catalyzes the conversion of L-lactate to pyruvate. Is coupled to the respiratory chain. The polypeptide is L-lactate dehydrogenase (Salmonella schwarzengrund (strain CVM19633)).